Consider the following 375-residue polypeptide: Succinyl-diaminopimelate desuccinylase (375 aa).

Residue H66 participates in Zn(2+) binding. The active site involves D68. D99 is a binding site for Zn(2+). Catalysis depends on E133, which acts as the Proton acceptor. E134, E162, and H348 together coordinate Zn(2+).

This sequence belongs to the peptidase M20A family. DapE subfamily. As to quaternary structure, homodimer. The cofactor is Zn(2+). Requires Co(2+) as cofactor.

The catalysed reaction is N-succinyl-(2S,6S)-2,6-diaminopimelate + H2O = (2S,6S)-2,6-diaminopimelate + succinate. It functions in the pathway amino-acid biosynthesis; L-lysine biosynthesis via DAP pathway; LL-2,6-diaminopimelate from (S)-tetrahydrodipicolinate (succinylase route): step 3/3. Catalyzes the hydrolysis of N-succinyl-L,L-diaminopimelic acid (SDAP), forming succinate and LL-2,6-diaminopimelate (DAP), an intermediate involved in the bacterial biosynthesis of lysine and meso-diaminopimelic acid, an essential component of bacterial cell walls. In Shigella boydii serotype 18 (strain CDC 3083-94 / BS512), this protein is Succinyl-diaminopimelate desuccinylase.